The following is a 312-amino-acid chain: Pantothenate kinase (312 aa).

An ATP-binding site is contributed by 97 to 104 (GSVAVGKS).

This sequence belongs to the prokaryotic pantothenate kinase family.

The protein localises to the cytoplasm. The catalysed reaction is (R)-pantothenate + ATP = (R)-4'-phosphopantothenate + ADP + H(+). It functions in the pathway cofactor biosynthesis; coenzyme A biosynthesis; CoA from (R)-pantothenate: step 1/5. The protein is Pantothenate kinase of Mycobacterium bovis (strain BCG / Pasteur 1173P2).